Reading from the N-terminus, the 318-residue chain is Acetyl-coenzyme A carboxylase carboxyl transferase subunit alpha (318 aa).

The CoA carboxyltransferase C-terminal domain maps to 41-295 (RLTTKSQELT…KRQLIADLGS (255 aa)).

This sequence belongs to the AccA family. Acetyl-CoA carboxylase is a heterohexamer composed of biotin carboxyl carrier protein (AccB), biotin carboxylase (AccC) and two subunits each of ACCase subunit alpha (AccA) and ACCase subunit beta (AccD).

The protein localises to the cytoplasm. It catalyses the reaction N(6)-carboxybiotinyl-L-lysyl-[protein] + acetyl-CoA = N(6)-biotinyl-L-lysyl-[protein] + malonyl-CoA. Its pathway is lipid metabolism; malonyl-CoA biosynthesis; malonyl-CoA from acetyl-CoA: step 1/1. In terms of biological role, component of the acetyl coenzyme A carboxylase (ACC) complex. First, biotin carboxylase catalyzes the carboxylation of biotin on its carrier protein (BCCP) and then the CO(2) group is transferred by the carboxyltransferase to acetyl-CoA to form malonyl-CoA. The polypeptide is Acetyl-coenzyme A carboxylase carboxyl transferase subunit alpha (Idiomarina loihiensis (strain ATCC BAA-735 / DSM 15497 / L2-TR)).